We begin with the raw amino-acid sequence, 539 residues long: Keratin, type II cytoskeletal 73 (539 aa).

The interval 1–130 (MNRQFTCKPG…DPEIQKVRAQ (130 aa)) is head. A coil 1A region spans residues 131–166 (EREQIKALNNKFASFIDKVRFLEQQNQVLQTKWELL). An IF rod domain is found at 131 to 444 (EREQIKALNN…KLLEGEECRM (314 aa)). Residues 167–185 (QQLDLSNCRRNLEPVYEAH) are linker 1. The coil 1B stretch occupies residues 186–277 (ISSLQKQLDS…CLYEGEITQM (92 aa)). Residues 278 to 301 (QSHISDTSVVLSMDNNRNLDLDSI) form a linker 12 region. The segment at 302-440 (IAEVRAQYED…ATYRKLLEGE (139 aa)) is coil 2. A tail region spans residues 441-539 (ECRMSGEHTS…LGSPSKKTMR (99 aa)).

It belongs to the intermediate filament family. In terms of assembly, heterotetramer of two type I and two type II keratins.

Functionally, has a role in hair formation. Specific component of keratin intermediate filaments in the inner root sheath (IRS) of the hair follicle. In Mus musculus (Mouse), this protein is Keratin, type II cytoskeletal 73 (Krt73).